We begin with the raw amino-acid sequence, 262 residues long: 5'-nucleotidase SurE (262 aa).

Aspartate 11, aspartate 12, serine 43, and asparagine 101 together coordinate a divalent metal cation.

The protein belongs to the SurE nucleotidase family. The cofactor is a divalent metal cation.

The protein localises to the cytoplasm. The catalysed reaction is a ribonucleoside 5'-phosphate + H2O = a ribonucleoside + phosphate. Functionally, nucleotidase that shows phosphatase activity on nucleoside 5'-monophosphates. The protein is 5'-nucleotidase SurE of Prochlorococcus marinus (strain NATL2A).